Consider the following 469-residue polypeptide: Probable acetate kinase (469 aa).

A Mg(2+)-binding site is contributed by N30. K37 is an ATP binding site. R122 provides a ligand contact to substrate. D179 acts as the Proton donor/acceptor in catalysis. 239–243 (HLGSG) contacts ATP. E453 lines the Mg(2+) pocket.

The protein belongs to the acetokinase family. Mg(2+) serves as cofactor.

The enzyme catalyses acetate + ATP = acetyl phosphate + ADP. It functions in the pathway metabolic intermediate biosynthesis; acetyl-CoA biosynthesis; acetyl-CoA from acetate: step 1/2. The protein is Probable acetate kinase of Neurospora crassa (strain ATCC 24698 / 74-OR23-1A / CBS 708.71 / DSM 1257 / FGSC 987).